The chain runs to 491 residues: MYIVQIASECAPVIKAGGLGDVVYGLSRELEVRGHCVELVLPKYDTMRYDQIWGLHDAYRDLWVPWYGGAIHCSVYCGWVHGRLCFFIEPHSGDNFFNRGCYYGCPDDNMRFAFFSKAALEFLLKSNKRPDIIHCHDWQTGLVPVLLFEIYKYHGMENQRVCYTIHNFKHQGFGGPEILWATGLNREPYYFHYDRLRDNFNPFALNFMKGGIVFSNFVTTVSPTHALEARFGNYNYGLGHTLYLHQHKFRGVLNGIDYDIWNPEIDRFIPFHYTAQTLENKAKNKKALRDQLWLQDVDKPIVAYIGRLDEQKGVHLVHHAIYRSLFKNAQFVLLGSATEPGIGAWFAHEKRYLNDNPDVHIELGFNEELSHLIYAGADILVVPSHYEPCGLTQMIGLKYGTVPVVRGVGGLVDTVFDRDYDTRKLPEQRNGYVFYHTDRAALESALDRAIDLWYTAPDQFRQLQVQGMSYDYSWNYPGKEYLEIYEFIRHR.

ADP-alpha-D-glucose is bound at residue Lys-15.

It belongs to the glycosyltransferase 1 family. Bacterial/plant glycogen synthase subfamily.

It carries out the reaction [(1-&gt;4)-alpha-D-glucosyl](n) + ADP-alpha-D-glucose = [(1-&gt;4)-alpha-D-glucosyl](n+1) + ADP + H(+). It functions in the pathway glycan biosynthesis; glycogen biosynthesis. Functionally, synthesizes alpha-1,4-glucan chains using ADP-glucose. This chain is Glycogen synthase 1, found in Synechococcus sp. (strain JA-3-3Ab) (Cyanobacteria bacterium Yellowstone A-Prime).